The sequence spans 181 residues: Putative manganese efflux pump MntP (181 aa).

6 consecutive transmembrane segments (helical) span residues 5-25 (LIAL…IALG), 36-56 (MFKV…MGMV), 66-86 (GLFA…VMIV), 102-122 (IGLF…GLSL), 130-150 (ALAV…GLFI), and 158-178 (VGPY…VKLL).

Belongs to the MntP (TC 9.B.29) family.

Its subcellular location is the cell membrane. Probably functions as a manganese efflux pump. The sequence is that of Putative manganese efflux pump MntP from Halalkalibacterium halodurans (strain ATCC BAA-125 / DSM 18197 / FERM 7344 / JCM 9153 / C-125) (Bacillus halodurans).